The following is a 189-amino-acid chain: Glucose-6-phosphate isomerase (189 aa).

Histidine 88, histidine 90, glutamate 97, and histidine 136 together coordinate Fe cation.

It belongs to the archaeal-type GPI family. In terms of assembly, homodimer. It depends on Fe cation as a cofactor.

The protein localises to the cytoplasm. It carries out the reaction alpha-D-glucose 6-phosphate = beta-D-fructose 6-phosphate. It participates in carbohydrate degradation; glycolysis; D-glyceraldehyde 3-phosphate and glycerone phosphate from D-glucose: step 2/4. The polypeptide is Glucose-6-phosphate isomerase (pgiA) (Pyrococcus horikoshii (strain ATCC 700860 / DSM 12428 / JCM 9974 / NBRC 100139 / OT-3)).